Here is a 277-residue protein sequence, read N- to C-terminus: Phosphate import ATP-binding protein PstB 2 (277 aa).

The 242-residue stretch at 31 to 272 (IEVPGLNLFY…PAKKQTEDYI (242 aa)) folds into the ABC transporter domain. Residue 63 to 70 (GPSGCGKS) coordinates ATP.

This sequence belongs to the ABC transporter superfamily. Phosphate importer (TC 3.A.1.7) family. As to quaternary structure, the complex is composed of two ATP-binding proteins (PstB), two transmembrane proteins (PstC and PstA) and a solute-binding protein (PstS).

The protein resides in the cell inner membrane. The enzyme catalyses phosphate(out) + ATP + H2O = ADP + 2 phosphate(in) + H(+). Part of the ABC transporter complex PstSACB involved in phosphate import. Responsible for energy coupling to the transport system. The protein is Phosphate import ATP-binding protein PstB 2 of Pseudomonas savastanoi pv. phaseolicola (strain 1448A / Race 6) (Pseudomonas syringae pv. phaseolicola (strain 1448A / Race 6)).